Reading from the N-terminus, the 526-residue chain is Peptide chain release factor 3 (526 aa).

In terms of domain architecture, tr-type G spans 9-277 (DKRRTFAIIS…GIVEWAPKPQ (269 aa)). GTP-binding positions include 18 to 25 (SHPDAGKT), 86 to 90 (DTPGH), and 140 to 143 (NKLD).

Belongs to the TRAFAC class translation factor GTPase superfamily. Classic translation factor GTPase family. PrfC subfamily.

It localises to the cytoplasm. Functionally, increases the formation of ribosomal termination complexes and stimulates activities of RF-1 and RF-2. It binds guanine nucleotides and has strong preference for UGA stop codons. It may interact directly with the ribosome. The stimulation of RF-1 and RF-2 is significantly reduced by GTP and GDP, but not by GMP. The sequence is that of Peptide chain release factor 3 from Shewanella woodyi (strain ATCC 51908 / MS32).